We begin with the raw amino-acid sequence, 137 residues long: Seminal plasma sperm motility inhibitor (137 aa).

A signal peptide spans Met-1 to Thr-21. Cys-30 and Cys-51 are oxidised to a cystine. Residues Cys-30–Ile-131 enclose the CUB domain. Asn-36 is a glycosylation site (N-linked (GlcNAc...) asparagine).

Belongs to the spermadhesin family. Seminal plasma or sperm.

The protein resides in the secreted. Its function is as follows. Inhibitor of sperm motility. This chain is Seminal plasma sperm motility inhibitor (SPMI), found in Sus scrofa (Pig).